The sequence spans 451 residues: ESX secretion system protein YukC (451 aa).

Residues 221–241 form a helical membrane-spanning segment; the sequence is IGLGLIVLLVPALIYSMYALF. Positions 362-447 form a coiled coil; it reads DEDIQKELDS…KKETEKKDEK (86 aa). Residues 376-386 show a composition bias toward basic and acidic residues; sequence LEKAQKERQEN. Residues 376 to 451 form a disordered region; the sequence is LEKAQKERQE…EKKDEKKDDK (76 aa). Residues 387 to 397 show a composition bias toward polar residues; it reads KQSNSETSLVD. The span at 406–451 shows a compositional bias: basic and acidic residues; the sequence is DEEKQAEEKAAEEKAAAEEKAKKEEQKEKEDEKKETEKKDEKKDDK.

The protein belongs to the EssB family.

It is found in the cell membrane. Its function is as follows. Required for YukE secretion. Probable component or regulator of the ESX/ESAT-6-like secretion system (BsEss). Required to deliver LXG toxins to target cells. In Bacillus subtilis (strain 168), this protein is ESX secretion system protein YukC (yukC).